Reading from the N-terminus, the 179-residue chain is MARLKDYYKKEVIPALISEFGYKNPMQVPVMKKIVVNMGLGEAIQNVKILDSAAGELEMITGQKVVITKAKRSIATFKLRKGMSIGCRVTLRRERMYEFLDRFINVALPRIRDFRGVSPNTFDGRGNYSIGVKEQIIFPEIEYDKIEKIRGMNIAIVTSANTDEEARALLKFMGVPFRS.

This sequence belongs to the universal ribosomal protein uL5 family. In terms of assembly, part of the 50S ribosomal subunit; part of the 5S rRNA/L5/L18/L25 subcomplex. Contacts the 5S rRNA and the P site tRNA. Forms a bridge to the 30S subunit in the 70S ribosome.

Functionally, this is one of the proteins that bind and probably mediate the attachment of the 5S RNA into the large ribosomal subunit, where it forms part of the central protuberance. In the 70S ribosome it contacts protein S13 of the 30S subunit (bridge B1b), connecting the 2 subunits; this bridge is implicated in subunit movement. Contacts the P site tRNA; the 5S rRNA and some of its associated proteins might help stabilize positioning of ribosome-bound tRNAs. This chain is Large ribosomal subunit protein uL5, found in Syntrophus aciditrophicus (strain SB).